We begin with the raw amino-acid sequence, 141 residues long: uncharacterized protein (141 aa).

Its subcellular location is the cytoplasm. This is an uncharacterized protein from Homo sapiens (Human).